A 1096-amino-acid chain; its full sequence is DNA-directed RNA polymerase subunit beta (1096 aa).

The segment at 1070 to 1096 is disordered; the sequence is LMQDVNPRRSTPSRPTYESLGSDYQED.

The protein belongs to the RNA polymerase beta chain family. As to quaternary structure, in cyanobacteria the RNAP catalytic core is composed of 2 alpha, 1 beta, 1 beta', 1 gamma and 1 omega subunit. When a sigma factor is associated with the core the holoenzyme is formed, which can initiate transcription.

It catalyses the reaction RNA(n) + a ribonucleoside 5'-triphosphate = RNA(n+1) + diphosphate. Functionally, DNA-dependent RNA polymerase catalyzes the transcription of DNA into RNA using the four ribonucleoside triphosphates as substrates. This is DNA-directed RNA polymerase subunit beta from Prochlorococcus marinus (strain MIT 9211).